The chain runs to 524 residues: Solute carrier family 35 member F5 (524 aa).

2 helical membrane-spanning segments follow: residues 69–89 (MALGIVILLLVDVIWVASSEL) and 101–121 (FFSTFAKTSMFVLYLLGFIIW). At S207 the chain carries Phosphoserine. Transmembrane regions (helical) follow at residues 244-264 (ISFFFCFVWFLANLSYQEALS), 269-289 (AIVNILSSTSGLFTLILAAVF), 297-317 (FTLSKLLAVILSIGGVVLVNL), 328-348 (TIGSIWSLAGAMFYAVYIVMI), 362-382 (MFFGFVGLFNLLLLWPGFFLL), 396-416 (VVLLCIIINGLIGTVLSEFLW), 421-441 (FLTSSLIGTLALSLTIPLSII), and 453-473 (WLFFAGAIPVFFSFFIVTLLC). Positions 253-317 (FLANLSYQEA…SIGGVVLVNL (65 aa)) constitute an EamA domain.

The protein belongs to the SLC35F solute transporter family.

It localises to the membrane. Putative solute transporter. The chain is Solute carrier family 35 member F5 (Slc35f5) from Mus musculus (Mouse).